The sequence spans 276 residues: NAD-capped RNA hydrolase NudC (276 aa).

Arg82 provides a ligand contact to substrate. Residues Cys112 and Cys115 each contribute to the Zn(2+) site. Substrate is bound at residue Glu125. Cys130 and Cys133 together coordinate Zn(2+). Residue Tyr138 coordinates substrate. The Nudix hydrolase domain occupies 139-262 (PRISPSMIVL…SIARYLIDLY (124 aa)). Positions 172, 188, and 192 each coordinate a divalent metal cation. Residues 173–194 (GFAEPGESAEDCLIREVREEVS) carry the Nudix box motif. Residue 206 to 213 (QCWPFPHS) participates in substrate binding. Glu233 serves as a coordination point for a divalent metal cation. Residue Ala255 coordinates substrate.

The protein belongs to the Nudix hydrolase family. NudC subfamily. Homodimer. Mg(2+) serves as cofactor. Requires Mn(2+) as cofactor. Zn(2+) is required as a cofactor.

It catalyses the reaction a 5'-end NAD(+)-phospho-ribonucleoside in mRNA + H2O = a 5'-end phospho-adenosine-phospho-ribonucleoside in mRNA + beta-nicotinamide D-ribonucleotide + 2 H(+). The catalysed reaction is NAD(+) + H2O = beta-nicotinamide D-ribonucleotide + AMP + 2 H(+). The enzyme catalyses NADH + H2O = reduced beta-nicotinamide D-ribonucleotide + AMP + 2 H(+). In terms of biological role, mRNA decapping enzyme that specifically removes the nicotinamide adenine dinucleotide (NAD) cap from a subset of mRNAs by hydrolyzing the diphosphate linkage to produce nicotinamide mononucleotide (NMN) and 5' monophosphate mRNA. The NAD-cap is present at the 5'-end of some mRNAs and stabilizes RNA against 5'-processing. Has preference for mRNAs with a 5'-end purine. Catalyzes the hydrolysis of a broad range of dinucleotide pyrophosphates. The chain is NAD-capped RNA hydrolase NudC from Pseudomonas fluorescens (strain ATCC BAA-477 / NRRL B-23932 / Pf-5).